The sequence spans 450 residues: tRNA-2-methylthio-N(6)-dimethylallyladenosine synthase (450 aa).

The 119-residue stretch at 14 to 132 folds into the MTTase N-terminal domain; it reads GEFFIETWGC…FPNYLNEVKK (119 aa). Positions 23, 59, 93, 169, 173, and 176 each coordinate [4Fe-4S] cluster. Residues 155-385 enclose the Radical SAM core domain; the sequence is RKNSMKAFVT…VEVVNEISAK (231 aa). The 63-residue stretch at 388-450 folds into the TRAM domain; sequence KAYEGKIEEV…NSFSLTGEEI (63 aa).

This sequence belongs to the methylthiotransferase family. MiaB subfamily. In terms of assembly, monomer. [4Fe-4S] cluster is required as a cofactor.

Its subcellular location is the cytoplasm. The catalysed reaction is N(6)-dimethylallyladenosine(37) in tRNA + (sulfur carrier)-SH + AH2 + 2 S-adenosyl-L-methionine = 2-methylsulfanyl-N(6)-dimethylallyladenosine(37) in tRNA + (sulfur carrier)-H + 5'-deoxyadenosine + L-methionine + A + S-adenosyl-L-homocysteine + 2 H(+). Its function is as follows. Catalyzes the methylthiolation of N6-(dimethylallyl)adenosine (i(6)A), leading to the formation of 2-methylthio-N6-(dimethylallyl)adenosine (ms(2)i(6)A) at position 37 in tRNAs that read codons beginning with uridine. This is tRNA-2-methylthio-N(6)-dimethylallyladenosine synthase from Clostridium botulinum (strain Loch Maree / Type A3).